The following is a 230-amino-acid chain: MASKVIRKFIQNAKLTVFSQEFIRLYLRGANVSKVIIRQTPIVNRVIIYSARPKMISEERKAHLAKLLELKFGLEKPVIEVLPIENPNLDAHVIAERLAMGIERNIRAYRRLAQRYLETIMNAGAIGAEIVIAGRLSGQRGKTWRFKAGNLRKTGTIGQFELDRAFNIAYLKPGVAGIHVTILKPDAEIPDIIEFKSPEEISIEEIEKIDKEIAEKMKKYLETYLLAKQM.

Residues 43-95 (VNRVIIYSARPKMISEERKAHLAKLLELKFGLEKPVIEVLPIENPNLDAHVIA) form the KH type-2 domain.

It belongs to the universal ribosomal protein uS3 family. Part of the 30S ribosomal subunit.

In terms of biological role, binds the lower part of the 30S subunit head. The polypeptide is Small ribosomal subunit protein uS3 (Nanoarchaeum equitans (strain Kin4-M)).